The primary structure comprises 199 residues: Probable molybdenum cofactor guanylyltransferase (199 aa).

GTP contacts are provided by residues 6–8 (LAG), Lys18, Asp65, and Asp97. Mg(2+) is bound at residue Asp97.

This sequence belongs to the MobA family. The cofactor is Mg(2+).

It is found in the cytoplasm. It catalyses the reaction Mo-molybdopterin + GTP + H(+) = Mo-molybdopterin guanine dinucleotide + diphosphate. Functionally, transfers a GMP moiety from GTP to Mo-molybdopterin (Mo-MPT) cofactor (Moco or molybdenum cofactor) to form Mo-molybdopterin guanine dinucleotide (Mo-MGD) cofactor. The sequence is that of Probable molybdenum cofactor guanylyltransferase from Staphylococcus aureus (strain COL).